The chain runs to 401 residues: MDKKKVVLAYSGGLDTSVAIKWLQEKNYDIIALCLDLGEGKDLAFVKEKALSVGAIKSYMIDVQEEFANEYALMAMQAHTLYEGKYPLVSALSRPLIAKKLVEIAEQEGATAVAHGCTGKGNDQVRFEVSIQALNPYLEVIAPVREWKWSREEEIAYAKENNVPIPINLDSPFSIDQNLWGRSNECGILEDPWAAPPEDAYEMTLALEDTPNKPEFVEIGFEAGVPTTLNGTAYPLSELIKTLNALAGKHGVGRIDHVENRLVGIKSREVYECPAAMTLITAHKELEDLTLVKEVAHFKPMIEQKITELIYNGLWFSPLKQALHAFLQETQKNVTGMVRVKLFKGHAIVEGRKSEYSLYDEKLATYTAQDEFNHDAAVGFISLFGLPTKVYSQVNQKKVEA.

ATP is bound at residue 9–17 (AYSGGLDTS). Tyr86 provides a ligand contact to L-citrulline. Residue Gly116 participates in ATP binding. Residues Thr118, Asn122, and Asp123 each coordinate L-aspartate. Asn122 provides a ligand contact to L-citrulline. 5 residues coordinate L-citrulline: Arg126, Ser174, Ser183, Glu259, and Tyr271.

This sequence belongs to the argininosuccinate synthase family. Type 1 subfamily. As to quaternary structure, homotetramer.

Its subcellular location is the cytoplasm. It carries out the reaction L-citrulline + L-aspartate + ATP = 2-(N(omega)-L-arginino)succinate + AMP + diphosphate + H(+). It functions in the pathway amino-acid biosynthesis; L-arginine biosynthesis; L-arginine from L-ornithine and carbamoyl phosphate: step 2/3. The polypeptide is Argininosuccinate synthase (Bacillus thuringiensis subsp. konkukian (strain 97-27)).